Consider the following 119-residue polypeptide: Large ribosomal subunit protein uL18 (119 aa).

The segment at 1-25 is disordered; the sequence is MITKIDKNKVRKKRHARVRSKISGT. Over residues 9-20 the composition is skewed to basic residues; sequence KVRKKRHARVRS.

The protein belongs to the universal ribosomal protein uL18 family. As to quaternary structure, part of the 50S ribosomal subunit; part of the 5S rRNA/L5/L18/L25 subcomplex. Contacts the 5S and 23S rRNAs.

Its function is as follows. This is one of the proteins that bind and probably mediate the attachment of the 5S RNA into the large ribosomal subunit, where it forms part of the central protuberance. In Listeria innocua serovar 6a (strain ATCC BAA-680 / CLIP 11262), this protein is Large ribosomal subunit protein uL18.